The following is a 954-amino-acid chain: Glycine dehydrogenase (decarboxylating) (954 aa).

Residue K704 is modified to N6-(pyridoxal phosphate)lysine.

It belongs to the GcvP family. As to quaternary structure, the glycine cleavage system is composed of four proteins: P, T, L and H. Pyridoxal 5'-phosphate serves as cofactor.

The enzyme catalyses N(6)-[(R)-lipoyl]-L-lysyl-[glycine-cleavage complex H protein] + glycine + H(+) = N(6)-[(R)-S(8)-aminomethyldihydrolipoyl]-L-lysyl-[glycine-cleavage complex H protein] + CO2. The glycine cleavage system catalyzes the degradation of glycine. The P protein binds the alpha-amino group of glycine through its pyridoxal phosphate cofactor; CO(2) is released and the remaining methylamine moiety is then transferred to the lipoamide cofactor of the H protein. The polypeptide is Glycine dehydrogenase (decarboxylating) (Agrobacterium fabrum (strain C58 / ATCC 33970) (Agrobacterium tumefaciens (strain C58))).